Consider the following 102-residue polypeptide: Small ribosomal subunit protein uS10 (102 aa).

The protein belongs to the universal ribosomal protein uS10 family. As to quaternary structure, part of the 30S ribosomal subunit.

In terms of biological role, involved in the binding of tRNA to the ribosomes. This Chlorobium phaeobacteroides (strain BS1) protein is Small ribosomal subunit protein uS10.